Here is a 653-residue protein sequence, read N- to C-terminus: Cell wall adhesin EAP1 (653 aa).

Residues 1 to 18 (MKVSQILPLAGAISVASG) form the signal peptide. The interval 19–146 (FWIPDFSNKQ…EYTTYCPLTS (128 aa)) is N-terminal cell-cell adhesion domain. Positions 144–267 (LTSTPATEST…TETASSTPVE (124 aa)) are disordered. Low complexity predominate over residues 145–267 (TSTPATESTP…TETASSTPVE (123 aa)). A run of 15 repeats spans residues 147–152 (TPATES), 153–158 (TPATES), 159–164 (TPATES), 165–170 (TPATES), 171–176 (TPATES), 177–182 (TPATES), 192–197 (TPATES), 198–203 (TPATES), 204–209 (TPATES), 210–215 (TPATES), 216–221 (TPATES), 222–227 (TPATES), 228–233 (TPATES), 234–248 (TPATESTPCTTSTET), and 249–254 (TPATES). The 15 X 6 AA tandem repeats, Ser/Thr-rich stretch occupies residues 147–254 (TPATESTPAT…STETTPATES (108 aa)). Residue Asn323 is glycosylated (N-linked (GlcNAc...) asparagine). Disordered regions lie at residues 324 to 540 (TSTP…TTQP) and 572 to 595 (EGGCVPEGQQTETSPSVPTNGPEV). 10 repeat units span residues 326–345 (TPAAPGTPVESQPVIPGTET), 346–365 (TPAAPGTPVESQPVIPGTET), 366–389 (TPAAPGTPVESQPATTPVAPGTET), 390–413 (TPAAPGTPVESQPATTPVAPGTET), 414–433 (TPAAPGTPVESQPVIPGTET), 434–457 (TPAAPGTPVESQPATTPVAPGTET), 458–477 (TPAAPGTPVESQPVIPGTET), 478–501 (TPAAPGTPVESQPATTPVAPGTET), 502–521 (TPAAPGTPVESQPVIPGTET), and 522–541 (TPAAPGTPGTEATPVTTQPV). The interval 326–541 (TPAAPGTPVE…EATPVTTQPV (216 aa)) is 10 X 20 AA approximate tandem repeats. Low complexity-rich tracts occupy residues 341–353 (PGTETTPAAPGTP) and 361–538 (PGTE…PVTT). Polar residues predominate over residues 579-590 (GQQTETSPSVPT). Gly632 carries the GPI-anchor amidated glycine lipid modification. A propeptide spans 633–653 (SGSALKKPYYGLAVAALVYFM) (removed in mature form).

Belongs to the PGA18 family. The GPI-anchor is attached to the protein in the endoplasmic reticulum and serves to target the protein to the cell surface. There, the glucosamine-inositol phospholipid moiety is cleaved off and the GPI-modified mannoprotein is covalently attached via its lipidless GPI glycan remnant to the 1,6-beta-glucan of the outer cell wall layer.

It localises to the secreted. Its subcellular location is the cell wall. The protein resides in the membrane. Its function is as follows. Cell wall protein which mediates cell-cell and cell-substrate adhesion. Required for biofilm formation and plays a role in virulence. In Candida albicans (strain SC5314 / ATCC MYA-2876) (Yeast), this protein is Cell wall adhesin EAP1 (EAP1).